The sequence spans 597 residues: Adenine deaminase (597 aa).

It belongs to the metallo-dependent hydrolases superfamily. Adenine deaminase family. Mn(2+) serves as cofactor.

The enzyme catalyses adenine + H2O + H(+) = hypoxanthine + NH4(+). In Paracoccus denitrificans (strain Pd 1222), this protein is Adenine deaminase.